We begin with the raw amino-acid sequence, 199 residues long: Thymidylate kinase (199 aa).

7 to 14 (GTEGVGKT) is a binding site for ATP.

It belongs to the thymidylate kinase family.

The catalysed reaction is dTMP + ATP = dTDP + ADP. Its function is as follows. Phosphorylation of dTMP to form dTDP in both de novo and salvage pathways of dTTP synthesis. This is Thymidylate kinase from Acinetobacter baumannii (strain ATCC 17978 / DSM 105126 / CIP 53.77 / LMG 1025 / NCDC KC755 / 5377).